The sequence spans 634 residues: Extracellular metalloproteinase mep (634 aa).

Positions 1 to 18 (MRGLLLAGALALPASVFA) are cleaved as a signal peptide. Positions 19–245 (HPAHQSYGLN…IHGVVDYVAE (227 aa)) are excised as a propeptide. N-linked (GlcNAc...) asparagine glycosylation occurs at Asn-286. His-429 contacts Zn(2+). Glu-430 is a catalytic residue. Zn(2+) is bound at residue His-433.

The protein belongs to the peptidase M36 family. Zn(2+) serves as cofactor.

It localises to the secreted. Secreted metalloproteinase that allows assimilation of proteinaceous substrates and probably acts as a virulence factor. This is Extracellular metalloproteinase mep (mep) from Aspergillus fumigatus (strain CBS 144.89 / FGSC A1163 / CEA10) (Neosartorya fumigata).